An 86-amino-acid polypeptide reads, in one-letter code: Cell division topological specificity factor (86 aa).

This sequence belongs to the MinE family.

In terms of biological role, prevents the cell division inhibition by proteins MinC and MinD at internal division sites while permitting inhibition at polar sites. This ensures cell division at the proper site by restricting the formation of a division septum at the midpoint of the long axis of the cell. This Rhizobium johnstonii (strain DSM 114642 / LMG 32736 / 3841) (Rhizobium leguminosarum bv. viciae) protein is Cell division topological specificity factor.